The primary structure comprises 714 residues: Phosphoribosylformylglycinamidine synthase subunit PurL (714 aa).

His-34 is an active-site residue. ATP is bound at residue Tyr-37. Residue Glu-78 coordinates Mg(2+). Residues 79–82 (SHNH) and Arg-101 each bind substrate. Residue His-80 is the Proton acceptor of the active site. Asp-102 contributes to the Mg(2+) binding site. Gln-226 contacts substrate. Residue Asp-254 participates in Mg(2+) binding. 298-300 (ESQ) contributes to the substrate binding site. ATP contacts are provided by Asp-474 and Gly-511. Asn-512 contributes to the Mg(2+) binding site. Ser-514 contacts substrate.

The protein belongs to the FGAMS family. Monomer. Part of the FGAM synthase complex composed of 1 PurL, 1 PurQ and 2 PurS subunits.

The protein resides in the cytoplasm. It catalyses the reaction N(2)-formyl-N(1)-(5-phospho-beta-D-ribosyl)glycinamide + L-glutamine + ATP + H2O = 2-formamido-N(1)-(5-O-phospho-beta-D-ribosyl)acetamidine + L-glutamate + ADP + phosphate + H(+). It functions in the pathway purine metabolism; IMP biosynthesis via de novo pathway; 5-amino-1-(5-phospho-D-ribosyl)imidazole from N(2)-formyl-N(1)-(5-phospho-D-ribosyl)glycinamide: step 1/2. Functionally, part of the phosphoribosylformylglycinamidine synthase complex involved in the purines biosynthetic pathway. Catalyzes the ATP-dependent conversion of formylglycinamide ribonucleotide (FGAR) and glutamine to yield formylglycinamidine ribonucleotide (FGAM) and glutamate. The FGAM synthase complex is composed of three subunits. PurQ produces an ammonia molecule by converting glutamine to glutamate. PurL transfers the ammonia molecule to FGAR to form FGAM in an ATP-dependent manner. PurS interacts with PurQ and PurL and is thought to assist in the transfer of the ammonia molecule from PurQ to PurL. The sequence is that of Phosphoribosylformylglycinamidine synthase subunit PurL from Methanothermobacter marburgensis (strain ATCC BAA-927 / DSM 2133 / JCM 14651 / NBRC 100331 / OCM 82 / Marburg) (Methanobacterium thermoautotrophicum).